A 68-amino-acid polypeptide reads, in one-letter code: Large ribosomal subunit protein bL35 (68 aa).

This sequence belongs to the bacterial ribosomal protein bL35 family.

This is Large ribosomal subunit protein bL35 from Onion yellows phytoplasma (strain OY-M).